The sequence spans 222 residues: Glutathione S-transferase A2 (222 aa).

At alanine 2 the chain carries N-acetylalanine. The GST N-terminal domain maps to 3–83 (EKPKLHYSNI…YIASKYNLYG (81 aa)). Lysine 4 is modified (N6-succinyllysine). Glutathione is bound by residues tyrosine 9, arginine 45, 54–55 (QV), and 67–68 (QT). A GST C-terminal domain is found at 85-207 (DIKEKALIDM…LQPGSPRKPP (123 aa)). The segment at 199-222 (QPGSPRKPPMDEKSLEESRKIFRF) is disordered. The span at 206-222 (PPMDEKSLEESRKIFRF) shows a compositional bias: basic and acidic residues.

This sequence belongs to the GST superfamily. Alpha family. Homodimer or heterodimer of GSTA1 and GSTA2. As to expression, liver.

It localises to the cytoplasm. It catalyses the reaction RX + glutathione = an S-substituted glutathione + a halide anion + H(+). Catalyzes the conjugation of glutathione to a large variety of electrophilic compounds. The chain is Glutathione S-transferase A2 (GSTA2) from Homo sapiens (Human).